Here is a 399-residue protein sequence, read N- to C-terminus: Formate-dependent phosphoribosylglycinamide formyltransferase (399 aa).

Residues 21 to 22 and Glu-81 contribute to the N(1)-(5-phospho-beta-D-ribosyl)glycinamide site; that span reads EL. ATP contacts are provided by residues Arg-114, Lys-156, 161 to 166, 196 to 199, and Glu-204; these read SSGKGQ and EGFI. An ATP-grasp domain is found at 119 to 314; that stretch reads RLAAEELGLP…EFELHARAIL (196 aa). Mg(2+) is bound by residues Glu-273 and Glu-285. N(1)-(5-phospho-beta-D-ribosyl)glycinamide is bound by residues Asp-292, Lys-361, and 368-369; that span reads RR. The disordered stretch occupies residues 370–399; the sequence is MGVAVANGESTDQARERAKLAASKVRPTRT.

It belongs to the PurK/PurT family. Homodimer.

It catalyses the reaction N(1)-(5-phospho-beta-D-ribosyl)glycinamide + formate + ATP = N(2)-formyl-N(1)-(5-phospho-beta-D-ribosyl)glycinamide + ADP + phosphate + H(+). Its pathway is purine metabolism; IMP biosynthesis via de novo pathway; N(2)-formyl-N(1)-(5-phospho-D-ribosyl)glycinamide from N(1)-(5-phospho-D-ribosyl)glycinamide (formate route): step 1/1. Its function is as follows. Involved in the de novo purine biosynthesis. Catalyzes the transfer of formate to 5-phospho-ribosyl-glycinamide (GAR), producing 5-phospho-ribosyl-N-formylglycinamide (FGAR). Formate is provided by PurU via hydrolysis of 10-formyl-tetrahydrofolate. In Dechloromonas aromatica (strain RCB), this protein is Formate-dependent phosphoribosylglycinamide formyltransferase.